Consider the following 654-residue polypeptide: Fatty acid photodecarboxylase, chloroplastic (654 aa).

The transit peptide at 1–62 (MASITSRASA…RRGGALSARA (62 aa)) directs the protein to the chloroplast. FAD-binding positions include 93 to 94 (TA), Glu-114, Leu-162, Ser-166, 170 to 173 (NATL), and Val-298. Residues Cys-432, Arg-451, Tyr-466, and Gln-486 each coordinate hexadecanoate. Gly-622 is an FAD binding site.

Belongs to the GMC oxidoreductase family. FAD is required as a cofactor.

The protein localises to the plastid. It is found in the chloroplast. The catalysed reaction is a long-chain fatty acid + hnu + H(+) = a long-chain alkane + CO2. The enzyme catalyses hnu + hexadecanoate + H(+) = pentadecane + CO2. It catalyses the reaction hnu + octadecanoate + H(+) = heptadecane + CO2. It carries out the reaction heptadecanoate + hnu + H(+) = hexadecane + CO2. The catalysed reaction is hnu + tetradecanoate + H(+) = tridecane + CO2. The enzyme catalyses octanoate + hnu + H(+) = heptane + CO2. With respect to regulation, activated by blue light and repressed by red light. Its function is as follows. Catalyzes the decarboxylation of free fatty acids to n-alkanes or n-alkenes in response to blue light. Substrate preference is toward fatty acids with C16 or C17 chains. Converts n-octanoic acid (C8 chain) more efficiently than palmitate (n-hexadecanoic acid, C16 chain) into n-heptane (C7 chain) and n-pentadecane (C15 chain), respectively, partly due to an autocatalytic effect of its n-heptane product. Saturated fatty acids are converted to alkanes, not alkenes. The decarboxylation is initiated through electron abstraction from the fatty acid by the photo-excited FAD. This chain is Fatty acid photodecarboxylase, chloroplastic, found in Chlorella variabilis (Green alga).